Reading from the N-terminus, the 1018-residue chain is 2-oxoglutarate dehydrogenase-like, mitochondrial (1018 aa).

Ca(2+)-binding residues include His-138, Asp-151, and Asp-153. Residues Arg-307, Asp-406, Asn-439, Ile-441, and Gln-671 each contribute to the thiamine diphosphate site. Residues Asp-406, Asn-439, and Ile-441 each coordinate Mg(2+).

The protein belongs to the alpha-ketoglutarate dehydrogenase family. The OGDHC complex comprises multiple copies of three catalytic enzyme components, the 2-oxoglutarate dehydrogenase (OGDH/E1), the dihydrolipoamide dehydrogenase (DLST/E2) and the dihydrolipoamide dehydrogenase (DLD/E3). OGDHL/E1-like isoenzyme may replace OGDH in the OGDHC complex in the brain. Requires thiamine diphosphate as cofactor. The cofactor is Mg(2+).

The protein resides in the mitochondrion matrix. The enzyme catalyses N(6)-[(R)-lipoyl]-L-lysyl-[protein] + 2-oxoglutarate + H(+) = N(6)-[(R)-S(8)-succinyldihydrolipoyl]-L-lysyl-[protein] + CO2. 2-oxoglutarate dehydrogenase (E1-like) component of the 2-oxoglutarate dehydrogenase multienzyme complex (OGDHC) which mediates the decarboxylation of alpha-ketoglutarate in the tricarboxylic acid cycle. The OGDHC complex catalyzes the overall conversion of 2-oxoglutarate to succinyl-CoA and CO(2) while reducing NAD(+) to NADH. The OGDHC complex is mainly active in the mitochondrion. Involved in the inhibition of cell proliferation and in apoptosis. The sequence is that of 2-oxoglutarate dehydrogenase-like, mitochondrial (ogdhl) from Xenopus laevis (African clawed frog).